A 317-amino-acid chain; its full sequence is Transaldolase (317 aa).

Residue lysine 126 is the Schiff-base intermediate with substrate of the active site.

This sequence belongs to the transaldolase family. Type 1 subfamily. Homodimer.

The protein resides in the cytoplasm. The catalysed reaction is D-sedoheptulose 7-phosphate + D-glyceraldehyde 3-phosphate = D-erythrose 4-phosphate + beta-D-fructose 6-phosphate. The protein operates within carbohydrate degradation; pentose phosphate pathway; D-glyceraldehyde 3-phosphate and beta-D-fructose 6-phosphate from D-ribose 5-phosphate and D-xylulose 5-phosphate (non-oxidative stage): step 2/3. In terms of biological role, transaldolase is important for the balance of metabolites in the pentose-phosphate pathway. In Burkholderia mallei (strain SAVP1), this protein is Transaldolase.